Reading from the N-terminus, the 172-residue chain is Endoribonuclease YbeY (172 aa).

His-134, His-138, and His-144 together coordinate Zn(2+).

This sequence belongs to the endoribonuclease YbeY family. Requires Zn(2+) as cofactor.

The protein localises to the cytoplasm. In terms of biological role, single strand-specific metallo-endoribonuclease involved in late-stage 70S ribosome quality control and in maturation of the 3' terminus of the 16S rRNA. This is Endoribonuclease YbeY from Burkholderia cenocepacia (strain HI2424).